The sequence spans 156 residues: Myosin regulatory light chain, striated adductor muscle (156 aa).

Alanine 1 carries the blocked amino end (Ala) modification. EF-hand domains are found at residues 15-50 and 84-119; these read KQIQ…LGRT and DSEE…MGDN. Aspartate 28, aspartate 30, aspartate 32, and aspartate 39 together coordinate Ca(2+).

In terms of biological role, in molluscan muscle, calcium regulation is associated with myosin rather than with actin. Muscle myosin contains two types of light chains: the catalytic light chain, essential for ATPase activity, and the regulatory light chain, a calcium-binding protein responsible for Ca(2+) dependent binding and Ca(2+) dependent Mg-ATPase activity. The chain is Myosin regulatory light chain, striated adductor muscle from Chlamys nipponensis akazara (Akazara scallop).